Consider the following 397-residue polypeptide: Major capsid protein (397 aa).

The segment at 1–24 (MAAPDPYKPGKYNDPAGGVESSIG) is disordered.

The protein localises to the virion. Functionally, assembles to form an icosahedral capsid. This is Major capsid protein from Pseudomonas phage KPP21.